The primary structure comprises 479 residues: MNRNPDQNTFPNITLKIIETYLGRVPSVNEYHMLKLQARNIQKITVFNKDIFVSLVKKNKKRFFSDVDTSASEIKDRILSYFSKQTQTYNIGKLFTIIELQSVLVTTYTDILGVLTIKAPNVISSKISYNVTSMEELARDMLNSMNVAVIDKAKVMGRHNVSSLVKNVNKLMEEYLRRHNKSCICYGSYSLYLINPNIRYGDIDILQTNSRTFLIDLAFLIKFITGNNIILSKIPYLRNYMVIKDENDNHIIDSFNIRQDTMNVVPKIFIDNIYIVDPTFQLLNMIKMFSQIDRLEDLSKDPEKFNARMATMLEYVRYTHGIVFDGKRNNMPMKCIIDENNRIVTVTTKDYFSFKKCLVYLDENVLSSDILDLNADTSCDFESVTNSVYLIHDNIMYTYFSNTILLSDKGKVHEISARGLCAHILLYQMLTSGEYKQCLSDLLNSMMNRDKIPIYSHTERDKKPGRHGFINIEKDIIVF.

Residues aspartate 202 and aspartate 204 contribute to the active site. 3 residues coordinate Ca(2+): aspartate 202, aspartate 204, and aspartate 253.

It belongs to the poxviridae poly(A) polymerase catalytic subunit family. In terms of assembly, heterodimer of a large (catalytic) subunit and a small (regulatory) subunit.

The catalysed reaction is RNA(n) + ATP = RNA(n)-3'-adenine ribonucleotide + diphosphate. Functionally, polymerase that creates the 3'-poly(A) tail of mRNA's. The polypeptide is Poly(A) polymerase catalytic subunit (OPG063) (Homo sapiens (Human)).